We begin with the raw amino-acid sequence, 391 residues long: GTPase Obg (391 aa).

Residues 1 to 159 form the Obg domain; that stretch reads MQFVDEATID…RRLRLELKVL (159 aa). The OBG-type G domain maps to 160–333; sequence ADVGLLGMPN…LVYALMNAIE (174 aa). GTP-binding positions include 166–173, 191–195, 213–216, 283–286, and 314–316; these read GMPNAGKS, FTTLI, DIPG, NKID, and SAA. 2 residues coordinate Mg(2+): serine 173 and threonine 193. The segment covering 367 to 377 has biased composition (basic and acidic residues); sequence LKAEARQARQN. The segment at 367 to 391 is disordered; the sequence is LKAEARQARQNDDDDDHDVEVVYEP. Residues 378 to 391 are compositionally biased toward acidic residues; sequence DDDDDHDVEVVYEP.

The protein belongs to the TRAFAC class OBG-HflX-like GTPase superfamily. OBG GTPase family. Monomer. It depends on Mg(2+) as a cofactor.

It is found in the cytoplasm. In terms of biological role, an essential GTPase which binds GTP, GDP and possibly (p)ppGpp with moderate affinity, with high nucleotide exchange rates and a fairly low GTP hydrolysis rate. Plays a role in control of the cell cycle, stress response, ribosome biogenesis and in those bacteria that undergo differentiation, in morphogenesis control. In Alcanivorax borkumensis (strain ATCC 700651 / DSM 11573 / NCIMB 13689 / SK2), this protein is GTPase Obg.